The chain runs to 365 residues: Baculoviral IAP repeat-containing protein 7 (365 aa).

BIR repeat units follow at residues 7–73 (RQRS…PFLQ) and 115–180 (RLGS…DFLL). Zn(2+)-binding residues include Cys149, Cys152, His169, and Cys176. Residues 186–234 (AFIRSVQESFFSSPETSPESVGSYEGSPVSSPGSPPVCPFLSTSVAQGA) are self-inhibits the anti-apoptotic function. A Phosphoserine modification is found at Ser198. Ser202 is subject to Phosphoserine; by MAPK1. At Ser212 the chain carries Phosphoserine. Ser216 and Ser219 each carry phosphoserine; by MAPK1. The interval 278-306 (TESVSVPRAPTQRERPEPPKEPAPPLSTE) is disordered. A compositionally biased stretch (basic and acidic residues) spans 288–297 (TQRERPEPPK). An RING-type zinc finger spans residues 318–353 (CKVCMDNDVSMVFVPCGHLVVCTECAPNLRHCPICR).

It belongs to the IAP family. Post-translationally, auto-ubiquitinated, and degraded in a 2-step mechanism; a caspase-independent first step and a caspase-dependent second step. Phosphorylated via MAPK-dependent and CDK-dependent pathways during oocyte maturation. Phosphorylation does not appear to affect caspase inhibition or autoubiquitination activity.

It localises to the cytoplasm. The enzyme catalyses S-ubiquitinyl-[E2 ubiquitin-conjugating enzyme]-L-cysteine + [acceptor protein]-L-lysine = [E2 ubiquitin-conjugating enzyme]-L-cysteine + N(6)-ubiquitinyl-[acceptor protein]-L-lysine.. Functionally, weak apoptotic suppressor. Has E3 ubiquitin-protein ligase activity. Weak inhibitor of caspase activity. The polypeptide is Baculoviral IAP repeat-containing protein 7 (birc7) (Xenopus tropicalis (Western clawed frog)).